The chain runs to 321 residues: Lipoyl synthase (321 aa).

7 residues coordinate [4Fe-4S] cluster: cysteine 60, cysteine 65, cysteine 71, cysteine 86, cysteine 90, cysteine 93, and serine 299. The Radical SAM core domain maps to 72 to 288 (WEKKHATFMI…ETIGRTKGFL (217 aa)).

This sequence belongs to the radical SAM superfamily. Lipoyl synthase family. Requires [4Fe-4S] cluster as cofactor.

Its subcellular location is the cytoplasm. The enzyme catalyses [[Fe-S] cluster scaffold protein carrying a second [4Fe-4S](2+) cluster] + N(6)-octanoyl-L-lysyl-[protein] + 2 oxidized [2Fe-2S]-[ferredoxin] + 2 S-adenosyl-L-methionine + 4 H(+) = [[Fe-S] cluster scaffold protein] + N(6)-[(R)-dihydrolipoyl]-L-lysyl-[protein] + 4 Fe(3+) + 2 hydrogen sulfide + 2 5'-deoxyadenosine + 2 L-methionine + 2 reduced [2Fe-2S]-[ferredoxin]. It functions in the pathway protein modification; protein lipoylation via endogenous pathway; protein N(6)-(lipoyl)lysine from octanoyl-[acyl-carrier-protein]: step 2/2. Catalyzes the radical-mediated insertion of two sulfur atoms into the C-6 and C-8 positions of the octanoyl moiety bound to the lipoyl domains of lipoate-dependent enzymes, thereby converting the octanoylated domains into lipoylated derivatives. The polypeptide is Lipoyl synthase (Mesorhizobium japonicum (strain LMG 29417 / CECT 9101 / MAFF 303099) (Mesorhizobium loti (strain MAFF 303099))).